A 376-amino-acid polypeptide reads, in one-letter code: Queuine tRNA-ribosyltransferase (376 aa).

The Proton acceptor role is filled by D93. Substrate contacts are provided by residues 93–97 (DSGGF), D147, Q190, and G217. Residues 248-254 (GVGKPGD) are RNA binding. The Nucleophile role is filled by D267. Zn(2+)-binding residues include C305, C307, C310, and H336.

The protein belongs to the queuine tRNA-ribosyltransferase family. Homodimer. Within each dimer, one monomer is responsible for RNA recognition and catalysis, while the other monomer binds to the replacement base PreQ1. Zn(2+) is required as a cofactor.

The enzyme catalyses 7-aminomethyl-7-carbaguanine + guanosine(34) in tRNA = 7-aminomethyl-7-carbaguanosine(34) in tRNA + guanine. It participates in tRNA modification; tRNA-queuosine biosynthesis. In terms of biological role, catalyzes the base-exchange of a guanine (G) residue with the queuine precursor 7-aminomethyl-7-deazaguanine (PreQ1) at position 34 (anticodon wobble position) in tRNAs with GU(N) anticodons (tRNA-Asp, -Asn, -His and -Tyr). Catalysis occurs through a double-displacement mechanism. The nucleophile active site attacks the C1' of nucleotide 34 to detach the guanine base from the RNA, forming a covalent enzyme-RNA intermediate. The proton acceptor active site deprotonates the incoming PreQ1, allowing a nucleophilic attack on the C1' of the ribose to form the product. After dissociation, two additional enzymatic reactions on the tRNA convert PreQ1 to queuine (Q), resulting in the hypermodified nucleoside queuosine (7-(((4,5-cis-dihydroxy-2-cyclopenten-1-yl)amino)methyl)-7-deazaguanosine). This is Queuine tRNA-ribosyltransferase from Dinoroseobacter shibae (strain DSM 16493 / NCIMB 14021 / DFL 12).